The chain runs to 140 residues: Probable disulfide formation protein C 2 (140 aa).

The chain crosses the membrane as a helical span at residues 6–25; the sequence is KYHIAIAWTIATSAMLISLI. A disulfide bridge connects residues cysteine 35 and cysteine 38. A run of 2 helical transmembrane segments spans residues 40–59 and 66–83; these read YQRMAMYPLVLILGIGMYRK and YAFPFACIGLIISVYQIT. A disulfide bond links cysteine 95 and cysteine 101. Residues 110–134 traverse the membrane as a helical segment; that stretch reads GFISIPMLSFVGFLAIIILLYINQI.

The protein belongs to the DsbB family. BdbC subfamily.

The protein resides in the cell membrane. In terms of biological role, required for disulfide bond formation in some proteins. The sequence is that of Probable disulfide formation protein C 2 (bdbC2) from Bacillus anthracis.